The following is a 305-amino-acid chain: Methionyl-tRNA formyltransferase (305 aa).

Ser111–Pro114 contributes to the (6S)-5,6,7,8-tetrahydrofolate binding site.

The protein belongs to the Fmt family.

The catalysed reaction is L-methionyl-tRNA(fMet) + (6R)-10-formyltetrahydrofolate = N-formyl-L-methionyl-tRNA(fMet) + (6S)-5,6,7,8-tetrahydrofolate + H(+). In terms of biological role, attaches a formyl group to the free amino group of methionyl-tRNA(fMet). The formyl group appears to play a dual role in the initiator identity of N-formylmethionyl-tRNA by promoting its recognition by IF2 and preventing the misappropriation of this tRNA by the elongation apparatus. The protein is Methionyl-tRNA formyltransferase of Campylobacter jejuni subsp. jejuni serotype O:6 (strain 81116 / NCTC 11828).